Consider the following 245-residue polypeptide: Ureidoacrylate amidohydrolase RutB (245 aa).

The active-site Proton acceptor is the aspartate 38. Lysine 147 is a catalytic residue. Cysteine 180 (nucleophile) is an active-site residue.

It belongs to the isochorismatase family. RutB subfamily.

The enzyme catalyses (Z)-3-ureidoacrylate + H2O + H(+) = (Z)-3-aminoacrylate + NH4(+) + CO2. The catalysed reaction is (Z)-3-ureidoacrylate + H2O = (Z)-3-aminoacrylate + carbamate + H(+). It catalyses the reaction (Z)-2-methylureidoacrylate + H2O + H(+) = (Z)-2-methylaminoacrylate + NH4(+) + CO2. Functionally, hydrolyzes ureidoacrylate to form aminoacrylate and carbamate. The carbamate hydrolyzes spontaneously, thereby releasing one of the nitrogen atoms of the pyrimidine ring as ammonia and one of its carbon atoms as CO2. The chain is Ureidoacrylate amidohydrolase RutB from Acinetobacter baylyi (strain ATCC 33305 / BD413 / ADP1).